A 101-amino-acid polypeptide reads, in one-letter code: Small ribosomal subunit protein bS18c (101 aa).

Over residues 1–19 (MDKSKQLFRKSKRSFRRRL) the composition is skewed to basic residues. Residues 1-23 (MDKSKQLFRKSKRSFRRRLPPIG) are disordered.

Belongs to the bacterial ribosomal protein bS18 family. Part of the 30S ribosomal subunit.

The protein resides in the plastid. Its subcellular location is the chloroplast. The protein is Small ribosomal subunit protein bS18c of Acorus calamus (Sweet flag).